A 169-amino-acid chain; its full sequence is Positive control factor (169 aa).

A DNA-binding region (H-T-H motif) is located at residues 132–157; it reads YERIADLLGVKKSTVQTTIKRASLKM.

In terms of biological role, positive regulatory protein that acts at the late promoter PL. The chain is Positive control factor (xpf) from Bacillus subtilis (strain 168).